The sequence spans 328 residues: DNA-directed RNA polymerase subunit alpha (328 aa).

The interval 1–231 (MIQQMQMPEK…DHVRLFSLFS (231 aa)) is alpha N-terminal domain (alpha-NTD). Residues 252–328 (MRKLLMTRIE…MEVTKYRLNQ (77 aa)) form an alpha C-terminal domain (alpha-CTD) region.

The protein belongs to the RNA polymerase alpha chain family. Homodimer. The RNAP catalytic core consists of 2 alpha, 1 beta, 1 beta' and 1 omega subunit. When a sigma factor is associated with the core the holoenzyme is formed, which can initiate transcription.

It carries out the reaction RNA(n) + a ribonucleoside 5'-triphosphate = RNA(n+1) + diphosphate. Its function is as follows. DNA-dependent RNA polymerase catalyzes the transcription of DNA into RNA using the four ribonucleoside triphosphates as substrates. This is DNA-directed RNA polymerase subunit alpha from Chloroherpeton thalassium (strain ATCC 35110 / GB-78).